We begin with the raw amino-acid sequence, 250 residues long: Gamma-secretase subunit APH1-like (250 aa).

7 helical membrane-spanning segments follow: residues 5–25 (AGIGYALVALGPSLSLFVSVI), 29–49 (PFLILTVLSSTLLWLVSLIIL), 57–77 (LPLKANVWWPYALLVITSVCF), 116–136 (IALAGGLGHGVAHAVFFCLSL), 157–177 (FLISAIIALAFVTIHTFSMVI), 191–211 (IIVPVIHLTAGMLTLVNFASE), and 212–232 (GCVIGVPLLYLVASLTLVHCG).

This sequence belongs to the APH-1 family. As to quaternary structure, probable component of the gamma-secretase complex, a complex composed of a presenilin homodimer, nicastrin, APH1 and PEN2.

It localises to the membrane. Probable subunit of the gamma-secretase complex, an endoprotease complex that catalyzes the intramembrane cleavage of integral proteins such as Notch receptors. The polypeptide is Gamma-secretase subunit APH1-like (Arabidopsis thaliana (Mouse-ear cress)).